The chain runs to 102 residues: Putative lipid-transfer protein DIR1 (102 aa).

The N-terminal stretch at 1-25 (MASKKAAMVMMAMIVIMAMLVDTSV) is a signal peptide. Cystine bridges form between C30-C67, C40-C56, C57-C94, and C69-C102. Q34 serves as a coordination point for a 1-acyl-sn-glycero-3-phosphocholine. E36 provides a ligand contact to Zn(2+). N38 contacts a 1-acyl-sn-glycero-3-phosphocholine. H62 is a binding site for Zn(2+).

This sequence belongs to the A9/FIL1 family. Self-interacts and binds to AZI1. Does not interact with PDLP1. Zn(2+) serves as cofactor.

Its subcellular location is the secreted. The protein resides in the extracellular space. It localises to the apoplast. The protein localises to the endoplasmic reticulum. It is found in the cell junction. Its subcellular location is the plasmodesma. Putative lipid transfer protein required for systemic acquired resistance (SAR) long distance signaling. May interact with a lipid-derived molecule to promote long distance signaling associated with SAR. Together with AZI1, required for glycerol-3-phosphate- (G3P) and azelaic acid- (AA) induced systemic acquired resistance (SAR). Component of plant systemic immunity involved in priming defenses in a AA-dependent manner, by modulating production and/or translocation of a mobile signal(s) during SAR. Is able to bind with high affinity monoacylated phospholipids, mainly lysophosphatidylcholines. In Arabidopsis thaliana (Mouse-ear cress), this protein is Putative lipid-transfer protein DIR1 (DIR1).